Consider the following 147-residue polypeptide: Hemoglobin subunit epsilon (147 aa).

In terms of domain architecture, Globin spans 3-147 (HFTAEEKAAI…VAIALGHKYH (145 aa)). 2 positions are modified to phosphoserine: S14 and S51. Heme b contacts are provided by H64 and H93.

This sequence belongs to the globin family. As to quaternary structure, heterotetramer of two alpha chains and two epsilon chains in early embryonic hemoglobin Gower-2; two zeta chains and two epsilon chains in early embryonic hemoglobin Gower-1. As to expression, red blood cells.

The epsilon chain is a beta-type chain of early mammalian embryonic hemoglobin. This is Hemoglobin subunit epsilon (HBE1) from Lagothrix lagotricha (Brown woolly monkey).